The chain runs to 467 residues: Tubulin beta-1 chain (467 aa).

8 residues coordinate GTP: glutamine 11, glutamate 69, serine 138, glycine 142, threonine 143, glycine 144, asparagine 204, and asparagine 226. A Mg(2+)-binding site is contributed by glutamate 69. The segment covering 429–444 has biased composition (acidic residues); sequence TIDDEEGGEEEEGGAE. Positions 429–448 are disordered; sequence TIDDEEGGEEEEGGAEEEAR.

It belongs to the tubulin family. In terms of assembly, dimer of alpha and beta chains. A typical microtubule is a hollow water-filled tube with an outer diameter of 25 nm and an inner diameter of 15 nM. Alpha-beta heterodimers associate head-to-tail to form protofilaments running lengthwise along the microtubule wall with the beta-tubulin subunit facing the microtubule plus end conferring a structural polarity. Microtubules usually have 13 protofilaments but different protofilament numbers can be found in some organisms and specialized cells. Mg(2+) is required as a cofactor.

Its subcellular location is the cytoplasm. It localises to the cytoskeleton. The protein localises to the spindle. The protein resides in the nucleus. In terms of biological role, tubulin is the major constituent of microtubules, a cylinder consisting of laterally associated linear protofilaments composed of alpha- and beta-tubulin heterodimers. Microtubules grow by the addition of GTP-tubulin dimers to the microtubule end, where a stabilizing cap forms. Below the cap, tubulin dimers are in GDP-bound state, owing to GTPase activity of alpha-tubulin. This Physarum polycephalum (Slime mold) protein is Tubulin beta-1 chain (BETA).